The sequence spans 460 residues: tRNA modification GTPase MnmE (460 aa).

Arginine 22, glutamate 83, and lysine 122 together coordinate (6S)-5-formyl-5,6,7,8-tetrahydrofolate. Positions 219–381 constitute a TrmE-type G domain; the sequence is GIKTLIIGRP…LQQTILKKFQ (163 aa). Residue asparagine 229 participates in K(+) binding. Residues 229–234, 248–254, and 273–276 contribute to the GTP site; these read NVGKSS, SDISGTT, and DTAG. Mg(2+) is bound at residue serine 233. Residues serine 248, isoleucine 250, and threonine 253 each coordinate K(+). A Mg(2+)-binding site is contributed by threonine 254. Residue lysine 460 participates in (6S)-5-formyl-5,6,7,8-tetrahydrofolate binding.

The protein belongs to the TRAFAC class TrmE-Era-EngA-EngB-Septin-like GTPase superfamily. TrmE GTPase family. In terms of assembly, homodimer. Heterotetramer of two MnmE and two MnmG subunits. K(+) is required as a cofactor.

Its subcellular location is the cytoplasm. In terms of biological role, exhibits a very high intrinsic GTPase hydrolysis rate. Involved in the addition of a carboxymethylaminomethyl (cmnm) group at the wobble position (U34) of certain tRNAs, forming tRNA-cmnm(5)s(2)U34. The polypeptide is tRNA modification GTPase MnmE (Aster yellows witches'-broom phytoplasma (strain AYWB)).